The primary structure comprises 312 residues: Ornithine carbamoyltransferase (312 aa).

Carbamoyl phosphate contacts are provided by residues 60–63 (STRT), glutamine 87, arginine 111, and 138–141 (HPCQ). L-ornithine is bound by residues asparagine 169, aspartate 229, and 233 to 234 (SM). Residues 268–269 (CL) and arginine 296 each bind carbamoyl phosphate.

This sequence belongs to the aspartate/ornithine carbamoyltransferase superfamily. OTCase family.

It localises to the cytoplasm. It carries out the reaction carbamoyl phosphate + L-ornithine = L-citrulline + phosphate + H(+). The protein operates within amino-acid biosynthesis; L-arginine biosynthesis; L-arginine from L-ornithine and carbamoyl phosphate: step 1/3. Its function is as follows. Reversibly catalyzes the transfer of the carbamoyl group from carbamoyl phosphate (CP) to the N(epsilon) atom of ornithine (ORN) to produce L-citrulline. The protein is Ornithine carbamoyltransferase of Rhodopseudomonas palustris (strain BisA53).